We begin with the raw amino-acid sequence, 204 residues long: Thymidylate kinase (204 aa).

ATP is bound at residue 11-18 (GIDGAGKS).

This sequence belongs to the thymidylate kinase family.

It catalyses the reaction dTMP + ATP = dTDP + ADP. Phosphorylation of dTMP to form dTDP in both de novo and salvage pathways of dTTP synthesis. In Janthinobacterium sp. (strain Marseille) (Minibacterium massiliensis), this protein is Thymidylate kinase.